Consider the following 311-residue polypeptide: Homeobox-leucine zipper protein ATHB-6 (311 aa).

Residues 1–10 (MMKRLSSSDS) show a composition bias toward polar residues. Residues 1 to 32 (MMKRLSSSDSVGGLISLCPTTSTDEQSPRRYG) form a disordered region. An interaction with ABI1 region spans residues 1–43 (MMKRLSSSDSVGGLISLCPTTSTDEQSPRRYGGREFQSMLEGY). A DNA-binding region (homeobox) is located at residues 59–118 (LSEKKRRLSINQVKALEKNFELENKLEPERKVKLAQELGLQPRQVAVWFQNRRARWKTKQ). The segment at 119–154 (LEKDYGVLKTQYDSLRHNFDSLRRDNESLLQEISKL) is leucine-zipper. Residues 157–183 (KLNGGGGEEEEEENNAAVTTESDISVK) are disordered. Residues 218–311 (LRDLLPLKAA…HWYSTVDHWN (94 aa)) form an interaction with ABI1 region.

This sequence belongs to the HD-ZIP homeobox family. Class I subfamily. As to quaternary structure, interacts with ABI1. Phosphorylated by PKA. Reversible inactivation of the binding to DNA by phosphorylation. As to expression, widely expressed.

The protein resides in the nucleus. In terms of biological role, transcription activator that may act as growth regulators in response to water deficit. Interacts with the core sequence 5'-CAATTATTA-3' of promoters in response to ABA and in an ABI1-dependent manner. Involved in the negative regulation of the ABA signaling pathway. The polypeptide is Homeobox-leucine zipper protein ATHB-6 (ATHB-6) (Arabidopsis thaliana (Mouse-ear cress)).